Here is a 175-residue protein sequence, read N- to C-terminus: Interferon gamma (175 aa).

The N-terminal stretch at 1–23 is a signal peptide; the sequence is MNATCCILALLLCLTQAISGCYC. Gln24 carries the pyrrolidone carboxylic acid modification. N-linked (GlcNAc...) asparagine glycosylation is found at Asn39 and Asn106.

It belongs to the type II (or gamma) interferon family. As to quaternary structure, homodimer. Interacts with IFNGR1 (via extracellular domain); this interaction promotes IFNGR1 dimerization. As to expression, released primarily from activated T lymphocytes.

It localises to the secreted. Its function is as follows. Type II interferon produced by immune cells such as T-cells and NK cells that plays crucial roles in antimicrobial, antiviral, and antitumor responses by activating effector immune cells and enhancing antigen presentation. Primarily signals through the JAK-STAT pathway after interaction with its receptor IFNGR1 to affect gene regulation. Upon IFNG binding, IFNGR1 intracellular domain opens out to allow association of downstream signaling components JAK2, JAK1 and STAT1, leading to STAT1 activation, nuclear translocation and transcription of IFNG-regulated genes. Many of the induced genes are transcription factors such as IRF1 that are able to further drive regulation of a next wave of transcription. Plays a role in class I antigen presentation pathway by inducing a replacement of catalytic proteasome subunits with immunoproteasome subunits. In turn, increases the quantity, quality, and repertoire of peptides for class I MHC loading. Increases the efficiency of peptide generation also by inducing the expression of activator PA28 that associates with the proteasome and alters its proteolytic cleavage preference. Up-regulates as well MHC II complexes on the cell surface by promoting expression of several key molecules such as cathepsins B/CTSB, H/CTSH, and L/CTSL. Participates in the regulation of hematopoietic stem cells during development and under homeostatic conditions by affecting their development, quiescence, and differentiation. The chain is Interferon gamma (IFNG) from Peromyscus maniculatus (North American deer mouse).